Consider the following 430-residue polypeptide: Glutamate-1-semialdehyde 2,1-aminomutase 2 (430 aa).

Residue K269 is modified to N6-(pyridoxal phosphate)lysine.

Belongs to the class-III pyridoxal-phosphate-dependent aminotransferase family. HemL subfamily. In terms of assembly, homodimer. Pyridoxal 5'-phosphate serves as cofactor.

It is found in the cytoplasm. The enzyme catalyses (S)-4-amino-5-oxopentanoate = 5-aminolevulinate. The protein operates within porphyrin-containing compound metabolism; protoporphyrin-IX biosynthesis; 5-aminolevulinate from L-glutamyl-tRNA(Glu): step 2/2. This is Glutamate-1-semialdehyde 2,1-aminomutase 2 from Bacillus pumilus (strain SAFR-032).